A 230-amino-acid chain; its full sequence is Large ribosomal subunit protein uL1 (230 aa).

This sequence belongs to the universal ribosomal protein uL1 family. As to quaternary structure, part of the 50S ribosomal subunit.

Binds directly to 23S rRNA. The L1 stalk is quite mobile in the ribosome, and is involved in E site tRNA release. In terms of biological role, protein L1 is also a translational repressor protein, it controls the translation of the L11 operon by binding to its mRNA. The chain is Large ribosomal subunit protein uL1 from Onion yellows phytoplasma (strain OY-M).